Reading from the N-terminus, the 80-residue chain is Small ribosomal subunit protein uS17 (80 aa).

Belongs to the universal ribosomal protein uS17 family. Part of the 30S ribosomal subunit.

Functionally, one of the primary rRNA binding proteins, it binds specifically to the 5'-end of 16S ribosomal RNA. This Brucella suis (strain ATCC 23445 / NCTC 10510) protein is Small ribosomal subunit protein uS17.